Reading from the N-terminus, the 757-residue chain is 5-methyltetrahydropteroyltriglutamate--homocysteine methyltransferase (757 aa).

Residues 15-18 (RELK) and lysine 114 contribute to the 5-methyltetrahydropteroyltri-L-glutamate site. L-homocysteine is bound by residues 428–430 (IGS) and glutamate 481. Residues 428–430 (IGS) and glutamate 481 each bind L-methionine. 5-methyltetrahydropteroyltri-L-glutamate is bound by residues 512-513 (RC) and tryptophan 558. Aspartate 596 contributes to the L-homocysteine binding site. Residue aspartate 596 participates in L-methionine binding. Glutamate 602 is a 5-methyltetrahydropteroyltri-L-glutamate binding site. Residues histidine 639, cysteine 641, and glutamate 663 each coordinate Zn(2+). Histidine 692 serves as the catalytic Proton donor. Zn(2+) is bound at residue cysteine 724.

Belongs to the vitamin-B12 independent methionine synthase family. Requires Zn(2+) as cofactor.

The enzyme catalyses 5-methyltetrahydropteroyltri-L-glutamate + L-homocysteine = tetrahydropteroyltri-L-glutamate + L-methionine. The protein operates within amino-acid biosynthesis; L-methionine biosynthesis via de novo pathway; L-methionine from L-homocysteine (MetE route): step 1/1. Functionally, catalyzes the transfer of a methyl group from 5-methyltetrahydrofolate to homocysteine resulting in methionine formation. The chain is 5-methyltetrahydropteroyltriglutamate--homocysteine methyltransferase from Lactococcus lactis subsp. cremoris (strain SK11).